The primary structure comprises 200 residues: ADP-ribosylation factor-like protein 4A (200 aa).

G2 carries N-myristoyl glycine lipidation. Residues 27–34, 75–79, and 134–137 contribute to the GTP site; these read GLDCAGKT, DVGGQ, and NKQD.

This sequence belongs to the small GTPase superfamily. Arf family. In terms of assembly, interacts with CYTH2. Interacts with KPNA2; the interaction is direct. Does not interact with ARL4A. Myristoylated. Expressed strongly in testis and liver. Expressed slightly in heart, spleen, lung and kidney.

The protein localises to the cell membrane. The protein resides in the cytoplasm. It is found in the nucleus. It localises to the nucleolus. Small GTP-binding protein which cycles between an inactive GDP-bound and an active GTP-bound form, and the rate of cycling is regulated by guanine nucleotide exchange factors (GEF) and GTPase-activating proteins (GAP). GTP-binding protein that does not act as an allosteric activator of the cholera toxin catalytic subunit. Recruits CYTH1, CYTH2, CYTH3 and CYTH4 to the plasma membrane in GDP-bound form. The polypeptide is ADP-ribosylation factor-like protein 4A (Arl4a) (Mus musculus (Mouse)).